The chain runs to 155 residues: Phosphoprotein pp24 (155 aa).

The tract at residues 1–50 is disordered; it reads MEFEAEHEGLTASWVAPAPQGGKGAEGRAGVADEAGHGKTEAECAEDGEK. The segment covering 34–50 has biased composition (basic and acidic residues); sequence EAGHGKTEAECAEDGEK. A coiled-coil region spans residues 76–107; that stretch reads RKRIEAKYMDLLVEAERENKNLRKKYNIILDV.

This Gallus gallus (Chicken) protein is Phosphoprotein pp24 (MDV008).